The sequence spans 609 residues: Elongation factor 4 (609 aa).

The 183-residue stretch at 11 to 193 folds into the tr-type G domain; it reads ERIRNFSIIA…QIVEKIPAPS (183 aa). Residues 23 to 28 and 140 to 143 each bind GTP; these read DHGKST and NKID.

It belongs to the TRAFAC class translation factor GTPase superfamily. Classic translation factor GTPase family. LepA subfamily.

The protein resides in the cell membrane. It carries out the reaction GTP + H2O = GDP + phosphate + H(+). Its function is as follows. Required for accurate and efficient protein synthesis under certain stress conditions. May act as a fidelity factor of the translation reaction, by catalyzing a one-codon backward translocation of tRNAs on improperly translocated ribosomes. Back-translocation proceeds from a post-translocation (POST) complex to a pre-translocation (PRE) complex, thus giving elongation factor G a second chance to translocate the tRNAs correctly. Binds to ribosomes in a GTP-dependent manner. The protein is Elongation factor 4 of Geobacillus thermodenitrificans (strain NG80-2).